Reading from the N-terminus, the 375-residue chain is MARDYYAILGVERDATDNEIKKAYRKLARKYHPDVNDTEEAAEKFSKISIAQEVLLDAEKRRIVDMGGDPMAQGGGDAGYGAGGGLGDIFEAFFGGGGGSRGPRSRVQPGSDALLRTTLTLEEAYLGTKKPITIDTAILCDRCEGTGSKSKSKPNVCSTCNGSGEIQQMQRSFLGNVMTSSPCPTCRGTGEVIPDPCDKCGGDGRVRTQRDLIVNVPAGIADGMRIRMAGQGEVGPGGGPAGDLYIEVMMQQHPVFQREGNDLHMSVHVPMVDAALGATTSVESLSGDAIDFEIPAGVQPAETIVIEGKGMPQLRGEGFGNMIAHVDVSIPTQLDEKSKELLNKLRDHRSDESSVRTADDSDDSLFGRLRNRFRR.

The 65-residue stretch at 4-68 folds into the J domain; sequence DYYAILGVER…EKRRIVDMGG (65 aa). The CR-type zinc finger occupies 127 to 209; the sequence is GTKKPITIDT…CGGDGRVRTQ (83 aa). 8 residues coordinate Zn(2+): Cys140, Cys143, Cys157, Cys160, Cys183, Cys186, Cys197, and Cys200. CXXCXGXG motif repeat units lie at residues 140-147, 157-164, 183-190, and 197-204; these read CDRCEGTG, CSTCNGSG, CPTCRGTG, and CDKCGGDG.

It belongs to the DnaJ family. Homodimer. The cofactor is Zn(2+).

It localises to the cytoplasm. In terms of biological role, participates actively in the response to hyperosmotic and heat shock by preventing the aggregation of stress-denatured proteins and by disaggregating proteins, also in an autonomous, DnaK-independent fashion. Unfolded proteins bind initially to DnaJ; upon interaction with the DnaJ-bound protein, DnaK hydrolyzes its bound ATP, resulting in the formation of a stable complex. GrpE releases ADP from DnaK; ATP binding to DnaK triggers the release of the substrate protein, thus completing the reaction cycle. Several rounds of ATP-dependent interactions between DnaJ, DnaK and GrpE are required for fully efficient folding. Also involved, together with DnaK and GrpE, in the DNA replication of plasmids through activation of initiation proteins. This Corynebacterium diphtheriae (strain ATCC 700971 / NCTC 13129 / Biotype gravis) protein is Chaperone protein DnaJ 1.